The chain runs to 121 residues: Non-specific lipid-transfer protein 3 (121 aa).

The N-terminal stretch at 1–28 is a signal peptide; the sequence is MAGARRTMALVALVAVVAAAVVAERASA. 4 cysteine pairs are disulfide-bonded: cysteine 32–cysteine 80, cysteine 42–cysteine 57, cysteine 58–cysteine 103, and cysteine 78–cysteine 117.

It belongs to the plant LTP family.

In terms of biological role, plant non-specific lipid-transfer proteins transfer phospholipids as well as galactolipids across membranes. May play a role in wax or cutin deposition in the cell walls of expanding epidermal cells and certain secretory tissues. May possess an antifungal activity and protect the plant against pathogens. This chain is Non-specific lipid-transfer protein 3 (LTP110-A), found in Oryza sativa subsp. indica (Rice).